The chain runs to 467 residues: tRNA(Ile)-lysidine synthase (467 aa).

An ATP-binding site is contributed by 35 to 40 (SGGPDS).

This sequence belongs to the tRNA(Ile)-lysidine synthase family.

The protein localises to the cytoplasm. The catalysed reaction is cytidine(34) in tRNA(Ile2) + L-lysine + ATP = lysidine(34) in tRNA(Ile2) + AMP + diphosphate + H(+). Functionally, ligates lysine onto the cytidine present at position 34 of the AUA codon-specific tRNA(Ile) that contains the anticodon CAU, in an ATP-dependent manner. Cytidine is converted to lysidine, thus changing the amino acid specificity of the tRNA from methionine to isoleucine. The chain is tRNA(Ile)-lysidine synthase from Caldanaerobacter subterraneus subsp. tengcongensis (strain DSM 15242 / JCM 11007 / NBRC 100824 / MB4) (Thermoanaerobacter tengcongensis).